Here is a 108-residue protein sequence, read N- to C-terminus: Large ribosomal subunit protein bL31B (108 aa).

Residues 81-108 form a disordered region; that stretch reads KPAQPVQAPAEEGPVVKGKKKAPAKKKK. Residues 97-108 are compositionally biased toward basic residues; sequence KGKKKAPAKKKK.

Belongs to the bacterial ribosomal protein bL31 family. Type B subfamily. Part of the 50S ribosomal subunit.

This is Large ribosomal subunit protein bL31B from Chlamydia caviae (strain ATCC VR-813 / DSM 19441 / 03DC25 / GPIC) (Chlamydophila caviae).